Consider the following 858-residue polypeptide: Heat shock protein 105 kDa (858 aa).

S2 is modified (N-acetylserine). Residue K471 is modified to N6-acetyllysine. 2 disordered regions span residues 500–584 (KVPT…PPEA) and 796–858 (CEPV…MDLD). Over residues 504-514 (EENEMSSEADM) the composition is skewed to acidic residues. A phosphoserine mark is found at S509 and S510. The span at 532-554 (QQDNSEAGTQPQVQTDAQQTSQS) shows a compositional bias: polar residues. S557 carries the phosphoserine modification. T561 bears the Phosphothreonine mark. Composition is skewed to basic and acidic residues over residues 563-584 (EENK…PPEA) and 805-814 (PKIESPKLER). Phosphoserine is present on S809. T815 bears the Phosphothreonine mark. Positions 821 to 832 (IDKKEEDLEDKN) are enriched in basic and acidic residues. Polar residues predominate over residues 849–858 (EKNSVNMDLD).

Belongs to the heat shock protein 70 family. Interacts with HSPA8/HSC70. Interacts with HSPA1A (via NBD) and HSPA1B (via NBD). In terms of processing, phosphorylation on Ser-509 may be important for regulation of the HSPA8/HSC70 chaperone activity.

The protein localises to the cytoplasm. Functionally, acts as a nucleotide-exchange factor (NEF) for chaperone proteins HSPA1A and HSPA1B, promoting the release of ADP from HSPA1A/B thereby triggering substrate release. Prevents the aggregation of denatured proteins in cells under severe stress, on which the ATP levels decrease markedly. Inhibits HSPA8/HSC70 ATPase and chaperone activities. This Pongo abelii (Sumatran orangutan) protein is Heat shock protein 105 kDa (HSPH1).